The chain runs to 602 residues: Aspartate--tRNA(Asp/Asn) ligase (602 aa).

Glu-170 contacts L-aspartate. Residues 194–197 are aspartate; sequence QLFK. Arg-216 contacts L-aspartate. ATP-binding positions include 216-218 and Gln-225; that span reads RDE. His-448 provides a ligand contact to L-aspartate. An ATP-binding site is contributed by Glu-482. Residue Arg-489 participates in L-aspartate binding. Residue 534–537 participates in ATP binding; that stretch reads GWDR. The disordered stretch occupies residues 559–602; that stretch reads GGVDPLTDAPAPISAQQRKESGIDAKPEKKSEDKKSEGDTAEAK. Positions 575 to 602 are enriched in basic and acidic residues; it reads QRKESGIDAKPEKKSEDKKSEGDTAEAK.

The protein belongs to the class-II aminoacyl-tRNA synthetase family. Type 1 subfamily. As to quaternary structure, homodimer.

Its subcellular location is the cytoplasm. The enzyme catalyses tRNA(Asx) + L-aspartate + ATP = L-aspartyl-tRNA(Asx) + AMP + diphosphate. Its function is as follows. Aspartyl-tRNA synthetase with relaxed tRNA specificity since it is able to aspartylate not only its cognate tRNA(Asp) but also tRNA(Asn). Reaction proceeds in two steps: L-aspartate is first activated by ATP to form Asp-AMP and then transferred to the acceptor end of tRNA(Asp/Asn). The chain is Aspartate--tRNA(Asp/Asn) ligase from Rhodococcus erythropolis (strain PR4 / NBRC 100887).